A 365-amino-acid chain; its full sequence is MSSTRAKIAVDAMGGDYAPDEIVAGAIRAVEELNVEVFLVGDPVRIQKYLDEHSSPANQFLHVVEAEGVVEMCEEPLVAIRRKPKASINLSMQLVRKKQADAVVSAGHSGAAMAAALLKLGRIKGIDRPAIGAVFPTLDPERSVIVLDVGANVDSRPKYLEQFALMGTIYSKYVLGNKEPQVGLLNIGEEPSKGNELALKTHELLSSNPAIPFKGNAEGRDVLSGEFDVVVCDGFTGNILLKFAESVGAVLLQILKEELPRGLRGKLGAAVLTPNLKRIKQRIDHAEHGGALLFGVAGVCIISHGSSKAPSIFNAIRLAKEAIDNQVIQRIQNYTEEHQALLEQQTNSTTTLSEVASSAMIEKSE.

It belongs to the PlsX family. In terms of assembly, homodimer. Probably interacts with PlsY.

Its subcellular location is the cytoplasm. It carries out the reaction a fatty acyl-[ACP] + phosphate = an acyl phosphate + holo-[ACP]. It participates in lipid metabolism; phospholipid metabolism. Catalyzes the reversible formation of acyl-phosphate (acyl-PO(4)) from acyl-[acyl-carrier-protein] (acyl-ACP). This enzyme utilizes acyl-ACP as fatty acyl donor, but not acyl-CoA. The chain is Phosphate acyltransferase from Picosynechococcus sp. (strain ATCC 27264 / PCC 7002 / PR-6) (Agmenellum quadruplicatum).